We begin with the raw amino-acid sequence, 388 residues long: D-xylose dehydrogenase (388 aa).

This sequence belongs to the Gfo/Idh/MocA family. In terms of assembly, homotetramer. Zn(2+) is required as a cofactor.

The enzyme catalyses D-xylose + NADP(+) = D-xylono-1,5-lactone + NADPH + H(+). It carries out the reaction D-xylose + NAD(+) = D-xylono-1,5-lactone + NADH + H(+). It functions in the pathway carbohydrate metabolism; D-xylose degradation. Its function is as follows. Catalyzes the NADP(+)-dependent oxidation of D-xylose. Is able to use both NADP(+) and NAD(+); however, the enzyme shows a very strong preference for NADP(+). Is likely involved in the first step of the oxidative D-xylose degradation pathway. The protein is D-xylose dehydrogenase (xdh) of Paenarthrobacter nicotinovorans (Arthrobacter nicotinovorans).